The chain runs to 417 residues: Gamma-glutamyl phosphate reductase (417 aa).

This sequence belongs to the gamma-glutamyl phosphate reductase family.

It localises to the cytoplasm. It carries out the reaction L-glutamate 5-semialdehyde + phosphate + NADP(+) = L-glutamyl 5-phosphate + NADPH + H(+). Its pathway is amino-acid biosynthesis; L-proline biosynthesis; L-glutamate 5-semialdehyde from L-glutamate: step 2/2. Catalyzes the NADPH-dependent reduction of L-glutamate 5-phosphate into L-glutamate 5-semialdehyde and phosphate. The product spontaneously undergoes cyclization to form 1-pyrroline-5-carboxylate. The polypeptide is Gamma-glutamyl phosphate reductase (Chlorobium phaeobacteroides (strain BS1)).